The chain runs to 470 residues: Argininosuccinate synthase (470 aa).

Residues 17–25 and A43 each bind ATP; that span reads AFSGGLDTS. An L-citrulline-binding site is contributed by Y99. Residues G129 and T131 each contribute to the ATP site. Residues T131, N135, and D136 each coordinate L-aspartate. Residue N135 coordinates L-citrulline. D136 is an ATP binding site. R139 and S192 together coordinate L-citrulline. D194 contacts ATP. L-citrulline is bound by residues T201, E203, and E280. A disordered region spans residues 448 to 470; the sequence is IASRGESSGDELLDRAAMESGTD.

The protein belongs to the argininosuccinate synthase family. Type 2 subfamily. In terms of assembly, homotetramer.

It localises to the cytoplasm. It catalyses the reaction L-citrulline + L-aspartate + ATP = 2-(N(omega)-L-arginino)succinate + AMP + diphosphate + H(+). It participates in amino-acid biosynthesis; L-arginine biosynthesis; L-arginine from L-ornithine and carbamoyl phosphate: step 2/3. The sequence is that of Argininosuccinate synthase from Kineococcus radiotolerans (strain ATCC BAA-149 / DSM 14245 / SRS30216).